Consider the following 139-residue polypeptide: Acidic phospholipase A2 4 (139 aa).

The first 16 residues, 1 to 16 (MRTLWIVAVWLVGVEG), serve as a signal peptide directing secretion. Disulfide bonds link cysteine 42-cysteine 131, cysteine 44-cysteine 60, cysteine 59-cysteine 111, cysteine 65-cysteine 139, cysteine 66-cysteine 104, cysteine 73-cysteine 97, and cysteine 91-cysteine 102. Ca(2+) contacts are provided by tyrosine 43, glycine 45, and glycine 47. Histidine 63 is an active-site residue. Aspartate 64 serves as a coordination point for Ca(2+). The active site involves aspartate 105.

Belongs to the phospholipase A2 family. Group II subfamily. D49 sub-subfamily. The cofactor is Ca(2+). As to expression, expressed by the venom gland.

The protein resides in the secreted. The catalysed reaction is a 1,2-diacyl-sn-glycero-3-phosphocholine + H2O = a 1-acyl-sn-glycero-3-phosphocholine + a fatty acid + H(+). In terms of biological role, PLA2 catalyzes the calcium-dependent hydrolysis of the 2-acyl groups in 3-sn-phosphoglycerides. The chain is Acidic phospholipase A2 4 from Echis carinatus sochureki (Saw-scaled viper).